Here is a 369-residue protein sequence, read N- to C-terminus: Lipoyl synthase, mitochondrial (369 aa).

The N-terminal 32 residues, 1–32 (MLTKGVRALAWSPRRYITLDAEAAKPVVAKRR), are a transit peptide targeting the mitochondrion. [4Fe-4S] cluster-binding residues include C106, C111, C117, C136, C140, C143, and S351. Residues 121 to 340 (NKGSATATIM…KEKALELGFL (220 aa)) enclose the Radical SAM core domain.

Belongs to the radical SAM superfamily. Lipoyl synthase family. [4Fe-4S] cluster is required as a cofactor.

The protein resides in the mitochondrion. It catalyses the reaction [[Fe-S] cluster scaffold protein carrying a second [4Fe-4S](2+) cluster] + N(6)-octanoyl-L-lysyl-[protein] + 2 oxidized [2Fe-2S]-[ferredoxin] + 2 S-adenosyl-L-methionine + 4 H(+) = [[Fe-S] cluster scaffold protein] + N(6)-[(R)-dihydrolipoyl]-L-lysyl-[protein] + 4 Fe(3+) + 2 hydrogen sulfide + 2 5'-deoxyadenosine + 2 L-methionine + 2 reduced [2Fe-2S]-[ferredoxin]. Its pathway is protein modification; protein lipoylation via endogenous pathway; protein N(6)-(lipoyl)lysine from octanoyl-[acyl-carrier-protein]: step 2/2. Functionally, catalyzes the radical-mediated insertion of two sulfur atoms into the C-6 and C-8 positions of the octanoyl moiety bound to the lipoyl domains of lipoate-dependent enzymes, thereby converting the octanoylated domains into lipoylated derivatives. This chain is Lipoyl synthase, mitochondrial, found in Eremothecium gossypii (strain ATCC 10895 / CBS 109.51 / FGSC 9923 / NRRL Y-1056) (Yeast).